The primary structure comprises 529 residues: T-complex protein 1 subunit delta (529 aa).

This sequence belongs to the TCP-1 chaperonin family. Heterooligomeric complex of about 850 to 900 kDa that forms two stacked rings, 12 to 16 nm in diameter.

The protein resides in the cytoplasm. Its function is as follows. Molecular chaperone; assists the folding of proteins upon ATP hydrolysis. Known to play a role, in vitro, in the folding of actin and tubulin. This Eremothecium gossypii (strain ATCC 10895 / CBS 109.51 / FGSC 9923 / NRRL Y-1056) (Yeast) protein is T-complex protein 1 subunit delta (CCT4).